The chain runs to 910 residues: Protein translocase subunit SecA (910 aa).

Residues Gln86, Gly104 to Thr108, and Asp508 each bind ATP. Residues Cys894, Cys896, Cys905, and Cys906 each contribute to the Zn(2+) site.

Belongs to the SecA family. Monomer and homodimer. Part of the essential Sec protein translocation apparatus which comprises SecA, SecYEG and auxiliary proteins SecDF. Other proteins may also be involved. It depends on Zn(2+) as a cofactor.

It is found in the cell membrane. Its subcellular location is the cytoplasm. The catalysed reaction is ATP + H2O + cellular proteinSide 1 = ADP + phosphate + cellular proteinSide 2.. In terms of biological role, part of the Sec protein translocase complex. Interacts with the SecYEG preprotein conducting channel. Has a central role in coupling the hydrolysis of ATP to the transfer of proteins into and across the cell membrane, serving as an ATP-driven molecular motor driving the stepwise translocation of polypeptide chains across the membrane. The chain is Protein translocase subunit SecA from Acetivibrio thermocellus (strain ATCC 27405 / DSM 1237 / JCM 9322 / NBRC 103400 / NCIMB 10682 / NRRL B-4536 / VPI 7372) (Clostridium thermocellum).